A 325-amino-acid polypeptide reads, in one-letter code: Pectinesterase A (325 aa).

The first 18 residues, 1 to 18 (MRVQSYLSLFSLVGAALC), serve as a signal peptide directing secretion. N-linked (GlcNAc...) asparagine glycosylation is present at Asn-126. Gln-143 is a binding site for substrate. The Proton donor role is filled by Asp-166. Asp-187 functions as the Nucleophile in the catalytic mechanism. Arg-247 and Trp-249 together coordinate substrate.

Belongs to the pectinesterase family.

The protein resides in the secreted. It catalyses the reaction [(1-&gt;4)-alpha-D-galacturonosyl methyl ester](n) + n H2O = [(1-&gt;4)-alpha-D-galacturonosyl](n) + n methanol + n H(+). It participates in glycan metabolism; pectin degradation; 2-dehydro-3-deoxy-D-gluconate from pectin: step 1/5. Its function is as follows. Involved in maceration and soft-rotting of plant tissue. Active against citrus pectin. The protein is Pectinesterase A (pmeA) of Emericella nidulans (strain FGSC A4 / ATCC 38163 / CBS 112.46 / NRRL 194 / M139) (Aspergillus nidulans).